A 382-amino-acid chain; its full sequence is F-box/kelch-repeat protein KIB1 (382 aa).

Residues 22-69 (SKHSILAVDLVRLILERLSFVDFHRARCVSSIWYIASKTVIGVTNPTT) form the F-box domain. Kelch repeat units follow at residues 73–117 (ILFP…ASSG), 159–209 (VLWV…FKEN), and 259–306 (IVAK…ITVE).

In terms of assembly, part of a SCF (SKP1-cullin-F-box) protein ligase complex. Binds directly to several GSK3 family proteins such as SKP1A/ASK1, ASK1/SK11, ASK3/SK12, ASK5/SK13, ASK7/BIN2/SK21, ASK9/SK22 and ASK6/SK23. Interacts with ASK7/BIN2/SK21 in a brassinosteroid (BR)-dependent manner. In terms of tissue distribution, expressed in seedlings, leaves, stems, flower buds and flowers.

The protein localises to the cytoplasm. Its subcellular location is the nucleus. It localises to the nucleolus. Functionally, component of SCF(ASK-cullin-F-box) E3 ubiquitin ligase complexes, which may mediate the ubiquitination and subsequent proteasomal degradation of target proteins. Required for brassinosteroid (BR) signal transduction. Mediates ASK7/BIN2/SK21 inactivation both by competing with substrate binding (e.g. BZR1) and by promoting its ubiquitination and subsequent proteasomal degradation. The protein is F-box/kelch-repeat protein KIB1 of Arabidopsis thaliana (Mouse-ear cress).